Consider the following 1939-residue polypeptide: Myosin-4 (1939 aa).

Positions aspartate 33 to proline 82 constitute a Myosin N-terminal SH3-like domain. A phosphothreonine mark is found at threonine 64 and threonine 69. Serine 79 is subject to Phosphoserine. The Myosin motor domain occupies aspartate 86 to aspartate 782. Lysine 130 carries the post-translational modification N6,N6,N6-trimethyllysine. Glycine 179–threonine 186 contributes to the ATP binding site. Tyrosine 389 bears the Phosphotyrosine mark. The residue at position 391 (threonine 391) is a Phosphothreonine. Serine 392 carries the phosphoserine modification. Threonine 419 is subject to Phosphothreonine. Tyrosine 424 bears the Phosphotyrosine mark. Serine 625 bears the Phosphoserine mark. The interval leucine 659–glutamate 681 is actin-binding. Histidine 757 carries the post-translational modification Pros-methylhistidine. Positions lysine 761–glycine 775 are actin-binding. The residue at position 776 (threonine 776) is a Phosphothreonine. Positions leucine 785–serine 814 constitute an IQ domain. A coiled-coil region spans residues leucine 843 to glutamate 1939. 3 positions are modified to phosphoserine: serine 1092, serine 1162, and serine 1237. Threonine 1241 carries the phosphothreonine modification. Phosphoserine is present on serine 1243. Threonine 1255 is subject to Phosphothreonine. Phosphoserine is present on serine 1261. At threonine 1265 the chain carries Phosphothreonine. A Phosphoserine modification is found at serine 1278. A Phosphothreonine modification is found at threonine 1286. A phosphoserine mark is found at serine 1288, serine 1292, serine 1303, serine 1306, and serine 1413. At tyrosine 1464 the chain carries Phosphotyrosine. Position 1467 is a phosphothreonine (threonine 1467). Position 1474 is a phosphoserine (serine 1474). Tyrosine 1492 carries the post-translational modification Phosphotyrosine. The residue at position 1495 (serine 1495) is a Phosphoserine. The residue at position 1501 (threonine 1501) is a Phosphothreonine. Serine 1514 is subject to Phosphoserine. Threonine 1517 carries the post-translational modification Phosphothreonine. Residues serine 1542, serine 1547, serine 1554, serine 1574, serine 1600, serine 1603, serine 1714, and serine 1726 each carry the phosphoserine modification. Residues threonine 1730 and threonine 1736 each carry the phosphothreonine modification. Phosphoserine is present on serine 1739.

Belongs to the TRAFAC class myosin-kinesin ATPase superfamily. Myosin family. As to quaternary structure, muscle myosin is a hexameric protein that consists of 2 heavy chain subunits (MHC), 2 alkali light chain subunits (MLC) and 2 regulatory light chain subunits (MLC-2).

The protein resides in the cytoplasm. Its subcellular location is the myofibril. Muscle contraction. The polypeptide is Myosin-4 (MYH4) (Homo sapiens (Human)).